We begin with the raw amino-acid sequence, 571 residues long: Proline--tRNA ligase (571 aa).

It belongs to the class-II aminoacyl-tRNA synthetase family. ProS type 1 subfamily. Homodimer.

It is found in the cytoplasm. The catalysed reaction is tRNA(Pro) + L-proline + ATP = L-prolyl-tRNA(Pro) + AMP + diphosphate. In terms of biological role, catalyzes the attachment of proline to tRNA(Pro) in a two-step reaction: proline is first activated by ATP to form Pro-AMP and then transferred to the acceptor end of tRNA(Pro). As ProRS can inadvertently accommodate and process non-cognate amino acids such as alanine and cysteine, to avoid such errors it has two additional distinct editing activities against alanine. One activity is designated as 'pretransfer' editing and involves the tRNA(Pro)-independent hydrolysis of activated Ala-AMP. The other activity is designated 'posttransfer' editing and involves deacylation of mischarged Ala-tRNA(Pro). The misacylated Cys-tRNA(Pro) is not edited by ProRS. This is Proline--tRNA ligase from Shewanella baltica (strain OS185).